Consider the following 418-residue polypeptide: MIFDKDDFKAYDADLWNAIAKEEERQQNNIELIASENVVSKAVMAAQGSILTNKYAEGYPGRRYYGGTDVVDVVETLAIERAKEIFGAKFANVQPHSGSQANCAAYMSLIEPGDTVMGMDLAAGGHLTHGAPVSFSGQTYNFLSYSVDPETELLDFDAILKQAQEVKPKLIVAGASAYSQIIDFSKFREIADAVGAKLMVDMAHIAGLVAAGLHPSPVPYAHITTTTTHKTLRGPRGGLILTNDEELAKKINSAIFPGIQGGPLEHVVAAKAVSFKEVLDPAFKEYAANVIKNSKAMADVFLQDPDFRIISGGTENHLFLVDVTKVVENGKVAQNLLDEVNITLNKNSIPYETLSPFKTSGIRIGAAAITARGFGEEESRKVAELIIKTLKNSENEAVLEEVRSAVKELTDAFPLYED.

Residues Leu-121 and 125–127 contribute to the (6S)-5,6,7,8-tetrahydrofolate site; that span reads GHL. Lys-230 is modified (N6-(pyridoxal phosphate)lysine). (6S)-5,6,7,8-tetrahydrofolate-binding positions include Glu-246 and 355 to 357; that span reads SPF.

The protein belongs to the SHMT family. In terms of assembly, homodimer. Pyridoxal 5'-phosphate serves as cofactor.

The protein resides in the cytoplasm. It carries out the reaction (6R)-5,10-methylene-5,6,7,8-tetrahydrofolate + glycine + H2O = (6S)-5,6,7,8-tetrahydrofolate + L-serine. Its pathway is one-carbon metabolism; tetrahydrofolate interconversion. It functions in the pathway amino-acid biosynthesis; glycine biosynthesis; glycine from L-serine: step 1/1. Its function is as follows. Catalyzes the reversible interconversion of serine and glycine with tetrahydrofolate (THF) serving as the one-carbon carrier. This reaction serves as the major source of one-carbon groups required for the biosynthesis of purines, thymidylate, methionine, and other important biomolecules. Also exhibits THF-independent aldolase activity toward beta-hydroxyamino acids, producing glycine and aldehydes, via a retro-aldol mechanism. The polypeptide is Serine hydroxymethyltransferase (Streptococcus pneumoniae serotype 2 (strain D39 / NCTC 7466)).